The sequence spans 431 residues: uncharacterized protein (431 aa).

This is an uncharacterized protein from Acanthamoeba polyphaga (Amoeba).